The following is a 201-amino-acid chain: 3-isopropylmalate dehydratase small subunit (201 aa).

This sequence belongs to the LeuD family. LeuD type 1 subfamily. In terms of assembly, heterodimer of LeuC and LeuD.

It catalyses the reaction (2R,3S)-3-isopropylmalate = (2S)-2-isopropylmalate. Its pathway is amino-acid biosynthesis; L-leucine biosynthesis; L-leucine from 3-methyl-2-oxobutanoate: step 2/4. Functionally, catalyzes the isomerization between 2-isopropylmalate and 3-isopropylmalate, via the formation of 2-isopropylmaleate. The chain is 3-isopropylmalate dehydratase small subunit from Salmonella schwarzengrund (strain CVM19633).